Reading from the N-terminus, the 453-residue chain is tRNA modification GTPase MnmE (453 aa).

Residues R22, E79, and K119 each coordinate (6S)-5-formyl-5,6,7,8-tetrahydrofolate. Residues 215–376 (GMKVVIAGRP…LKQHLKSLMG (162 aa)) form the TrmE-type G domain. N225 contributes to the K(+) binding site. GTP is bound by residues 225-230 (NAGKSS), 244-250 (TEIAGTT), 269-272 (DTAG), and 334-337 (NKAD). S229 provides a ligand contact to Mg(2+). 3 residues coordinate K(+): T244, I246, and T249. T250 provides a ligand contact to Mg(2+). Residue K453 coordinates (6S)-5-formyl-5,6,7,8-tetrahydrofolate.

Belongs to the TRAFAC class TrmE-Era-EngA-EngB-Septin-like GTPase superfamily. TrmE GTPase family. In terms of assembly, homodimer. Heterotetramer of two MnmE and two MnmG subunits. K(+) is required as a cofactor.

The protein localises to the cytoplasm. Functionally, exhibits a very high intrinsic GTPase hydrolysis rate. Involved in the addition of a carboxymethylaminomethyl (cmnm) group at the wobble position (U34) of certain tRNAs, forming tRNA-cmnm(5)s(2)U34. The polypeptide is tRNA modification GTPase MnmE (Shewanella baltica (strain OS195)).